Here is a 417-residue protein sequence, read N- to C-terminus: Ribulose bisphosphate carboxylase large chain (417 aa).

Residues Asn103 and Thr153 each contribute to the substrate site. Lys155 (proton acceptor) is an active-site residue. Substrate is bound at residue Lys157. Mg(2+) contacts are provided by Lys181, Asp183, and Glu184. Position 181 is an N6-carboxylysine (Lys181). The active-site Proton acceptor is His274. Arg275, His307, and Ser359 together coordinate substrate.

Belongs to the RuBisCO large chain family. Type I subfamily. As to quaternary structure, heterohexadecamer of 8 large chains and 8 small chains. Mg(2+) is required as a cofactor.

The protein localises to the plastid. It is found in the chloroplast. The catalysed reaction is 2 (2R)-3-phosphoglycerate + 2 H(+) = D-ribulose 1,5-bisphosphate + CO2 + H2O. The enzyme catalyses D-ribulose 1,5-bisphosphate + O2 = 2-phosphoglycolate + (2R)-3-phosphoglycerate + 2 H(+). Functionally, ruBisCO catalyzes two reactions: the carboxylation of D-ribulose 1,5-bisphosphate, the primary event in carbon dioxide fixation, as well as the oxidative fragmentation of the pentose substrate in the photorespiration process. Both reactions occur simultaneously and in competition at the same active site. The protein is Ribulose bisphosphate carboxylase large chain of Acrostichum aureum (Golden leather fern).